Here is a 274-residue protein sequence, read N- to C-terminus: NH(3)-dependent NAD(+) synthetase (274 aa).

Position 46 to 53 (46 to 53 (GISGGQDS)) interacts with ATP. Residue Asp-52 participates in Mg(2+) binding. Deamido-NAD(+) is bound at residue Arg-140. ATP is bound at residue Thr-160. Residue Glu-165 coordinates Mg(2+). 2 residues coordinate deamido-NAD(+): Lys-173 and Asp-180. The ATP site is built by Lys-189 and Thr-211. Position 260–261 (260–261 (HK)) interacts with deamido-NAD(+).

This sequence belongs to the NAD synthetase family. As to quaternary structure, homodimer.

It carries out the reaction deamido-NAD(+) + NH4(+) + ATP = AMP + diphosphate + NAD(+) + H(+). The protein operates within cofactor biosynthesis; NAD(+) biosynthesis; NAD(+) from deamido-NAD(+) (ammonia route): step 1/1. Functionally, catalyzes the ATP-dependent amidation of deamido-NAD to form NAD. Uses ammonia as a nitrogen source. The polypeptide is NH(3)-dependent NAD(+) synthetase (Streptococcus pyogenes serotype M1).